Consider the following 37-residue polypeptide: Potassium channel toxin alpha-KTx 1.3 (37 aa).

Pyrrolidone carboxylic acid is present on Q1. 3 disulfide bridges follow: C7–C28, C13–C33, and C17–C35. Residues 26–33 are interaction with Ca(2+)-activated K(+) channels; that stretch reads GKCMGKKC.

Belongs to the short scorpion toxin superfamily. Potassium channel inhibitor family. Alpha-KTx 01 subfamily. Expressed by the venom gland.

The protein localises to the secreted. Its function is as follows. Blocks selectively the high conductance calcium-activated (maxi-K) potassium channels (KCa1.1/KCNMA1). The polypeptide is Potassium channel toxin alpha-KTx 1.3 (Hottentotta tamulus (Eastern Indian scorpion)).